Reading from the N-terminus, the 118-residue chain is 5-hydroxyisourate hydrolase (118 aa).

Residues histidine 7, arginine 46, and tyrosine 115 each coordinate substrate.

The protein belongs to the transthyretin family. 5-hydroxyisourate hydrolase subfamily. As to quaternary structure, homotetramer.

The catalysed reaction is 5-hydroxyisourate + H2O = 5-hydroxy-2-oxo-4-ureido-2,5-dihydro-1H-imidazole-5-carboxylate + H(+). Functionally, catalyzes the hydrolysis of 5-hydroxyisourate (HIU) to 2-oxo-4-hydroxy-4-carboxy-5-ureidoimidazoline (OHCU). The polypeptide is 5-hydroxyisourate hydrolase (Brucella melitensis biotype 1 (strain ATCC 23456 / CCUG 17765 / NCTC 10094 / 16M)).